Reading from the N-terminus, the 274-residue chain is Karrikin insensitive 2 receptor IA (274 aa).

Ser95 functions as the Nucleophile in the catalytic mechanism. Residues Asp217 and His246 contribute to the active site.

It belongs to the AB hydrolase superfamily. Interacts with MAX2A and MAX2B in the presence of (-)-germacrene D, thus forming an E3 SCF ubiquitin ligase complex (ASK-cullin-F-box) containing MAX2A or MAX2B and KAI2IA recognizing SMAX1A; this leads to the subsequent degradation of the transcriptional corepressor SMAX1A, thus triggering the activation of a downstream signaling cascade. As to expression, strongly expressed in stigma.

Its subcellular location is the nucleus. It localises to the cytoplasm. Hydrolysis activity toward yoshimulactone green (YLG), a fluorescent agonist to strigolactone receptor, is inhibited by (-)-germacrene D and GR24, a synthetic strigolactone analog. Its function is as follows. Hydrolase involved in the olfaction of sesquiterpene volatile organic compounds (VOCs) during volatile plant communication in a MAX2 proteins-dependent manner. Acts as a karrikin-insensitive receptor that stereospecifically perceives and binds to (-)-germacrene D, particularly in stigmas, and triggers a signaling cascade influencing plant fitness, as the result of reproductive organ growth-promoting effect; this process involves an interaction with MAX2 proteins (e.g. MAX2A and MAX2B) and the subsequent degradation of SMAX1a, a transcriptional corepressor. The sequence is that of Karrikin insensitive 2 receptor IA from Petunia hybrida (Petunia).